The chain runs to 349 residues: Twinfilin-2 (349 aa).

ADF-H domains are found at residues 4 to 139 and 177 to 313; these read QTGI…KHVS and GLAF…DEVH. The interval 324-349 is disordered; the sequence is AKPKGPVGKRGQKRLIKGPGENGEDS.

Belongs to the actin-binding proteins ADF family. Twinfilin subfamily. In terms of assembly, interacts with G-actin; ADP-actin form and capping protein (CP).

The protein localises to the cytoplasm. It localises to the cytoskeleton. The protein resides in the perinuclear region. In terms of biological role, actin-binding protein involved in motile and morphological processes. Inhibits actin polymerization, likely by sequestering G-actin. The polypeptide is Twinfilin-2 (TWF2) (Gallus gallus (Chicken)).